Here is a 594-residue protein sequence, read N- to C-terminus: Probable methylenetetrahydrofolate reductase (NADH) (594 aa).

The Proton donor/acceptor role is filled by Glu-21. Residues Glu-21 to Lys-26 and Thr-52 to Trp-53 contribute to the NAD(+) site. Residues Thr-52–Trp-53, His-81, Arg-111–Asp-113, Tyr-153, His-157–Ala-160, Asp-175, and Lys-182 each bind FAD. Asp-113 is a binding site for substrate. Positions 193 and 285 each coordinate substrate.

It belongs to the methylenetetrahydrofolate reductase family. Homodimer. It depends on FAD as a cofactor.

It carries out the reaction (6S)-5-methyl-5,6,7,8-tetrahydrofolate + NAD(+) = (6R)-5,10-methylene-5,6,7,8-tetrahydrofolate + NADH + H(+). It functions in the pathway one-carbon metabolism; tetrahydrofolate interconversion. With respect to regulation, plant MTHFRs strongly prefer NADH over NADPH. Not inhibited by methionine or S-adenosylmethionine. In terms of biological role, the probable reversibility of the MTHFR reaction in plants suggests that they can metabolize the methyl group of 5,10-methylenetetrahydrofolate to serine, sugars and starch. The polypeptide is Probable methylenetetrahydrofolate reductase (NADH) (Oryza sativa subsp. japonica (Rice)).